The chain runs to 164 residues: Large ribosomal subunit protein uL10 (164 aa).

It belongs to the universal ribosomal protein uL10 family. Part of the ribosomal stalk of the 50S ribosomal subunit. The N-terminus interacts with L11 and the large rRNA to form the base of the stalk. The C-terminus forms an elongated spine to which L12 dimers bind in a sequential fashion forming a multimeric L10(L12)X complex.

Forms part of the ribosomal stalk, playing a central role in the interaction of the ribosome with GTP-bound translation factors. The chain is Large ribosomal subunit protein uL10 from Helicobacter pylori (strain HPAG1).